We begin with the raw amino-acid sequence, 542 residues long: CTP synthase (542 aa).

Positions 1–265 (MARYVFITGG…DNEVLAAFGI (265 aa)) are amidoligase domain. Ser-13 contacts CTP. Ser-13 contacts UTP. Residues 14–19 (SLGKGI) and Asp-71 contribute to the ATP site. Asp-71 and Glu-139 together coordinate Mg(2+). CTP contacts are provided by residues 146 to 148 (DIE), 186 to 191 (KTKPTQ), and Lys-222. Residues 186-191 (KTKPTQ) and Lys-222 each bind UTP. Residues 291-541 (TIAIVGKYTG…IEAALEQSRL (251 aa)) enclose the Glutamine amidotransferase type-1 domain. Gly-353 lines the L-glutamine pocket. The active-site Nucleophile; for glutamine hydrolysis is Cys-380. L-glutamine is bound by residues 381 to 384 (FGMQ), Glu-404, and Arg-469. Active-site residues include His-514 and Glu-516.

The protein belongs to the CTP synthase family. As to quaternary structure, homotetramer.

It catalyses the reaction UTP + L-glutamine + ATP + H2O = CTP + L-glutamate + ADP + phosphate + 2 H(+). The enzyme catalyses L-glutamine + H2O = L-glutamate + NH4(+). It carries out the reaction UTP + NH4(+) + ATP = CTP + ADP + phosphate + 2 H(+). Its pathway is pyrimidine metabolism; CTP biosynthesis via de novo pathway; CTP from UDP: step 2/2. Allosterically activated by GTP, when glutamine is the substrate; GTP has no effect on the reaction when ammonia is the substrate. The allosteric effector GTP functions by stabilizing the protein conformation that binds the tetrahedral intermediate(s) formed during glutamine hydrolysis. Inhibited by the product CTP, via allosteric rather than competitive inhibition. Functionally, catalyzes the ATP-dependent amination of UTP to CTP with either L-glutamine or ammonia as the source of nitrogen. Regulates intracellular CTP levels through interactions with the four ribonucleotide triphosphates. In Sinorhizobium medicae (strain WSM419) (Ensifer medicae), this protein is CTP synthase.